We begin with the raw amino-acid sequence, 305 residues long: 3-methyl-2-oxobutanoate hydroxymethyltransferase (305 aa).

Residues aspartate 52 and aspartate 95 each contribute to the Mg(2+) site. 3-methyl-2-oxobutanoate-binding positions include 52–53 (DS), aspartate 95, and lysine 125. A Mg(2+)-binding site is contributed by glutamate 127. The active-site Proton acceptor is the glutamate 194.

Belongs to the PanB family. Homodecamer; pentamer of dimers. It depends on Mg(2+) as a cofactor.

It is found in the cytoplasm. It catalyses the reaction 3-methyl-2-oxobutanoate + (6R)-5,10-methylene-5,6,7,8-tetrahydrofolate + H2O = 2-dehydropantoate + (6S)-5,6,7,8-tetrahydrofolate. Its pathway is cofactor biosynthesis; (R)-pantothenate biosynthesis; (R)-pantoate from 3-methyl-2-oxobutanoate: step 1/2. Its function is as follows. Catalyzes the reversible reaction in which hydroxymethyl group from 5,10-methylenetetrahydrofolate is transferred onto alpha-ketoisovalerate to form ketopantoate. This is 3-methyl-2-oxobutanoate hydroxymethyltransferase from Anaeromyxobacter sp. (strain Fw109-5).